Consider the following 239-residue polypeptide: MNIEQFQSMLEEKGITLSSRQLEQFEIYFETLVEWNEKMNLTAITEKEEVYLKHFFDSITAAFYYDFSKPFSICDVGAGAGFPSIPLKICFPHLKVTIVDSLQKRINFLNHLAQKLELSDVAFCHDRAETFGKKEGVREAYDIVMARAVARLSVLSELCLPLVKVGGTFIAMKGAAANEEIENGKYALEVLGGDLKEMSTFQLPFEESERNILLIEKKRKTPKKYPRKPGTPNKLPIEK.

S-adenosyl-L-methionine contacts are provided by residues G77, F82, 128-129 (AE), and R147.

The protein belongs to the methyltransferase superfamily. RNA methyltransferase RsmG family.

The protein resides in the cytoplasm. Specifically methylates the N7 position of guanine in position 535 of 16S rRNA. This Bacillus anthracis (strain A0248) protein is Ribosomal RNA small subunit methyltransferase G.